The sequence spans 549 residues: Cytoplasmic trehalase (549 aa).

Substrate contacts are provided by residues arginine 168, 175–176 (WD), asparagine 212, 221–223 (RSQ), 292–294 (RDE), and glycine 324. Catalysis depends on proton donor/acceptor residues aspartate 326 and glutamate 509. Glutamate 525 contacts substrate.

This sequence belongs to the glycosyl hydrolase 37 family. Monomer.

The protein localises to the cytoplasm. It carries out the reaction alpha,alpha-trehalose + H2O = alpha-D-glucose + beta-D-glucose. Its pathway is glycan degradation; trehalose degradation; D-glucose from alpha,alpha-trehalose: step 1/1. Functionally, hydrolyzes trehalose to glucose. Could be involved, in cells returning to low osmolarity conditions, in the utilization of the accumulated cytoplasmic trehalose, which was synthesized in response to high osmolarity. The sequence is that of Cytoplasmic trehalase from Escherichia coli (strain 55989 / EAEC).